The primary structure comprises 103 residues: Small ribosomal subunit protein uS10 (103 aa).

The protein belongs to the universal ribosomal protein uS10 family. As to quaternary structure, part of the 30S ribosomal subunit.

In terms of biological role, involved in the binding of tRNA to the ribosomes. This is Small ribosomal subunit protein uS10 from Azoarcus sp. (strain BH72).